Consider the following 570-residue polypeptide: Glycine--tRNA ligase (570 aa).

Substrate-binding residues include Arg99 and Glu165. Residues 197–199 (RNE), 207–212 (LRLREF), 324–325 (EC), and 443–446 (GIDR) each bind ATP. A substrate-binding site is contributed by 212-216 (FTQAE). 439-443 (EPSFG) contributes to the substrate binding site.

The protein belongs to the class-II aminoacyl-tRNA synthetase family.

It localises to the cytoplasm. The catalysed reaction is tRNA(Gly) + glycine + ATP = glycyl-tRNA(Gly) + AMP + diphosphate. Functionally, catalyzes the attachment of glycine to tRNA(Gly). This Thermococcus gammatolerans (strain DSM 15229 / JCM 11827 / EJ3) protein is Glycine--tRNA ligase.